The following is a 418-amino-acid chain: MMRMSWMVTVINRRMMKILIALALIAYIASVWGTYANMRSIQEHGEMKIEQRIDEAVGPLREKIRELELSFTQKYPPVKFLSEKDRKRILITGGAGFVGSHLTDKLMMDGHEVTVVDNFFTGRKRNVEHWIGHENFELINHDVVEPLYIEVDQIYHLASPASPPNYMYNPIKTLKTNTIGTLNMLGLAKRVGARLLLASTSEVYGDPEVHPQNEDYWGHVNPIGPRACYDEGKRVAETMCYAYMKQEGVEVRVARIFNTFGSRMHMNDGRVVSNFILQALQGEALTVYGSGSQTRAFQYVSDLVNGLVSLMNSNISSPVNLGNPEEHTILEFAQLIKSLVASRSHIQFLPEAQDDPQRRRPDIRKAKLLLGWEPVVPLEEGLNKTIQYFSRELEHQANNQYIPKPKAARMKKGRPRHN.

Residues 1–17 (MMRMSWMVTVINRRMMK) are Cytoplasmic-facing. A helical; Signal-anchor for type II membrane protein membrane pass occupies residues 18-38 (ILIALALIAYIASVWGTYANM). Residues 39–418 (RSIQEHGEMK…RMKKGRPRHN (380 aa)) are Lumenal-facing. The NAD(+) site is built by G96, F97, V98, D117, N118, F120, T121, G122, D142, and V143. L147 and Y148 together coordinate UDP-alpha-D-glucuronate. Residues L157 and S159 each contribute to the NAD(+) site. K175 is a binding site for UDP-alpha-D-glucuronate. T176 contributes to the NAD(+) binding site. UDP-alpha-D-glucuronate is bound by residues N183, G186, K189, and R190. Residues A198, Y229, and K233 each coordinate NAD(+). The active-site Proton acceptor is the Y229. UDP-alpha-D-glucuronate-binding residues include Y243, Q246, and E247. T259, H265, and R270 together coordinate NAD(+). N-linked (GlcNAc...) asparagine glycosylation is found at N314 and N383. A disordered region spans residues 397–418 (ANNQYIPKPKAARMKKGRPRHN). Over residues 406 to 418 (KAARMKKGRPRHN) the composition is skewed to basic residues.

The protein belongs to the NAD(P)-dependent epimerase/dehydratase family. UDP-glucuronic acid decarboxylase subfamily. Homodimer and homotetramer. NAD(+) is required as a cofactor.

It is found in the golgi apparatus. Its subcellular location is the golgi stack membrane. The enzyme catalyses UDP-alpha-D-glucuronate + H(+) = UDP-alpha-D-xylose + CO2. It functions in the pathway nucleotide-sugar biosynthesis; UDP-alpha-D-xylose biosynthesis; UDP-alpha-D-xylose from UDP-alpha-D-glucuronate: step 1/1. In terms of biological role, catalyzes the NAD-dependent decarboxylation of UDP-glucuronic acid to UDP-xylose. Necessary for the biosynthesis of the core tetrasaccharide in glycosaminoglycan biosynthesis. Essential during embryogenesis for craniofacial development. This is UDP-glucuronic acid decarboxylase 1 from Danio rerio (Zebrafish).